A 281-amino-acid chain; its full sequence is MITSAHIDDIRTQVRAWRAKGETVAFVPTMGNLHQGHITLVKEAASKCDHVVASIFVNPMQFGQNEDLDAYPRTLAADSEALTAAGAELLFTPTPAVMYPKGLEQQTYVEVPGISNVLCGASRPGHFRGVATIVCKLFNIVQPDVALFGNKDYQQLLVIKTMVEDLSLPIEIIGVDTIREDSGLAMSSRNGYLTAAEKAAAPALKQAIDAMAAGIKQGESFEQVTEQAKASLIAAGFTPDYLEIRHAHTLEQAQNQHQALVILTAAYIGKARLIDNLRFDS.

30-37 (MGNLHQGH) contributes to the ATP binding site. The Proton donor role is filled by His37. Gln61 is a binding site for (R)-pantoate. Gln61 contacts beta-alanine. An ATP-binding site is contributed by 149 to 152 (GNKD). Residue Gln155 participates in (R)-pantoate binding. Residues Ile178 and 186–189 (MSSR) contribute to the ATP site.

It belongs to the pantothenate synthetase family. As to quaternary structure, homodimer.

The protein resides in the cytoplasm. It catalyses the reaction (R)-pantoate + beta-alanine + ATP = (R)-pantothenate + AMP + diphosphate + H(+). The protein operates within cofactor biosynthesis; (R)-pantothenate biosynthesis; (R)-pantothenate from (R)-pantoate and beta-alanine: step 1/1. In terms of biological role, catalyzes the condensation of pantoate with beta-alanine in an ATP-dependent reaction via a pantoyl-adenylate intermediate. In Shewanella baltica (strain OS155 / ATCC BAA-1091), this protein is Pantothenate synthetase.